A 407-amino-acid polypeptide reads, in one-letter code: Multidrug resistance protein MdtH (407 aa).

The next 10 helical transmembrane spans lie at C13 to I33, L88 to L108, V139 to L159, F163 to W183, F210 to M230, W247 to S267, L277 to L297, H298 to R318, L340 to G360, and L368 to F388.

It belongs to the major facilitator superfamily. DHA1 family. MdtH (TC 2.A.1.2.21) subfamily.

The protein resides in the cell inner membrane. The protein is Multidrug resistance protein MdtH of Blochmanniella pennsylvanica (strain BPEN).